Here is a 203-residue protein sequence, read N- to C-terminus: Imidazole glycerol phosphate synthase subunit HisH 1 (203 aa).

Residues methionine 1–isoleucine 203 enclose the Glutamine amidotransferase type-1 domain. Cysteine 82 acts as the Nucleophile in catalysis. Catalysis depends on residues histidine 184 and glutamate 186.

Heterodimer of HisH and HisF.

It localises to the cytoplasm. It carries out the reaction 5-[(5-phospho-1-deoxy-D-ribulos-1-ylimino)methylamino]-1-(5-phospho-beta-D-ribosyl)imidazole-4-carboxamide + L-glutamine = D-erythro-1-(imidazol-4-yl)glycerol 3-phosphate + 5-amino-1-(5-phospho-beta-D-ribosyl)imidazole-4-carboxamide + L-glutamate + H(+). The enzyme catalyses L-glutamine + H2O = L-glutamate + NH4(+). The protein operates within amino-acid biosynthesis; L-histidine biosynthesis; L-histidine from 5-phospho-alpha-D-ribose 1-diphosphate: step 5/9. Functionally, IGPS catalyzes the conversion of PRFAR and glutamine to IGP, AICAR and glutamate. The HisH subunit provides the glutamine amidotransferase activity that produces the ammonia necessary to HisF for the synthesis of IGP and AICAR. The protein is Imidazole glycerol phosphate synthase subunit HisH 1 (hisH1) of Methanococcus maripaludis (strain DSM 14266 / JCM 13030 / NBRC 101832 / S2 / LL).